We begin with the raw amino-acid sequence, 80 residues long: Large ribosomal subunit protein uL24 (80 aa).

The protein belongs to the universal ribosomal protein uL24 family. As to quaternary structure, part of the 50S ribosomal subunit.

Its function is as follows. One of two assembly initiator proteins, it binds directly to the 5'-end of the 23S rRNA, where it nucleates assembly of the 50S subunit. In terms of biological role, one of the proteins that surrounds the polypeptide exit tunnel on the outside of the subunit. This Prosthecochloris aestuarii (strain DSM 271 / SK 413) protein is Large ribosomal subunit protein uL24.